Reading from the N-terminus, the 170-residue chain is dCTP pyrophosphatase 1 (170 aa).

Residues 1–27 (MSVAGGEIRGDTGGEDTAAPGRFSFSP) are disordered. Ser2 bears the N-acetylserine mark. A Phosphoserine modification is found at Ser2. Thr12 carries the post-translational modification Phosphothreonine. Substrate contacts are provided by residues His38 and 47 to 51 (WEQFH). Mg(2+) is bound by residues Glu63 and Glu66. Trp73 contributes to the substrate binding site. Ser85 bears the Phosphoserine mark. Residues Glu95 and Asp98 each coordinate Mg(2+). A substrate-binding site is contributed by Tyr102. A disordered region spans residues 147–170 (GAISEDQAVGPADIPCDSTGQTST).

In terms of assembly, homotetramer. Mg(2+) serves as cofactor.

It is found in the mitochondrion. The protein resides in the nucleus. The protein localises to the cytoplasm. It localises to the cytosol. The catalysed reaction is dCTP + H2O = dCMP + diphosphate + H(+). Its activity is regulated as follows. Inhibited by the reaction end product PPi. Inhibited by dCDP. Inhibited by triptolide. Functionally, hydrolyzes deoxynucleoside triphosphates (dNTPs) to the corresponding nucleoside monophosphates. Has a strong preference for dCTP and its analogs including 5-iodo-dCTP and 5-methyl-dCTP for which it may even have a higher efficiency. May protect DNA or RNA against the incorporation of these genotoxic nucleotide analogs through their catabolism. In Homo sapiens (Human), this protein is dCTP pyrophosphatase 1.